We begin with the raw amino-acid sequence, 312 residues long: Olfactory receptor 2C1 (312 aa).

Topologically, residues 1-24 are extracellular; it reads MEVDSNSSSGSFILMGVSDHPHLE. N-linked (GlcNAc...) asparagine glycosylation is present at asparagine 6. Residues 25–48 form a helical membrane-spanning segment; it reads IIFFAVILASYLLTLVGNLTIILL. At 49-57 the chain is on the cytoplasmic side; that stretch reads SRLDARLHT. Residues 58 to 79 traverse the membrane as a helical segment; that stretch reads PMYFFLSNLSSLDLAFTTSSVP. At 80–100 the chain is on the extracellular side; that stretch reads QMLKNLWGPDKTISYGGCVTQ. A disulfide bridge connects residues cysteine 97 and cysteine 189. Residues 101-120 traverse the membrane as a helical segment; the sequence is LYVFLWLGATECILLVVMAF. Residues 121–139 lie on the Cytoplasmic side of the membrane; that stretch reads DRYVAVCRPLHYMTVMNPR. Residues 140 to 160 traverse the membrane as a helical segment; the sequence is LCWGLAAISWLGGLGNSVIQS. The Extracellular portion of the chain corresponds to 161 to 200; that stretch reads TFTLQLPFCGHRKVDNFLCEVPAMIKLACGDTSLNEAVLN. The helical transmembrane segment at 201-222 threads the bilayer; that stretch reads GVCTFFTVVPVSVILVSYCFIA. Over 223 to 236 the chain is Cytoplasmic; the sequence is QAVMKIRSVEGRRK. A helical transmembrane segment spans residues 237-261; the sequence is AFNTCVSHLVVVFLFYGSAIYGYLL. Residues 262–272 lie on the Extracellular side of the membrane; sequence PAKSSNQSQGK. The helical transmembrane segment at 273-292 threads the bilayer; it reads FISLFYSVVTPMVNPLIYTL. At 293–312 the chain is on the cytoplasmic side; sequence RNKEVKGALGRLLGKGRGAS.

This sequence belongs to the G-protein coupled receptor 1 family. As to expression, olfactory epithelium. Present in various subcellular compartments of the olfactory sensory neurons, particularly in the axonal processes and neve terminals.

It is found in the cell membrane. Olfactory receptor that is activated by the binding of organosulfur odorants with thioether groups such as (methylthio)methanetiol (MTMT). Also binds odorants acetophenone and benzaldehyde. The activity of this receptor is mediated by G proteins which activate adenylyl cyclase. May be involved in the molecular processes underlying fasciculation and targeting of olfactory axons. The sequence is that of Olfactory receptor 2C1 from Mus musculus (Mouse).